We begin with the raw amino-acid sequence, 233 residues long: LexA repressor (233 aa).

The H-T-H motif DNA-binding region spans 26–46 (FDEMKEALDLRSKSGIHRLIT). Catalysis depends on for autocatalytic cleavage activity residues Ser-154 and Lys-192.

It belongs to the peptidase S24 family. In terms of assembly, homodimer.

The catalysed reaction is Hydrolysis of Ala-|-Gly bond in repressor LexA.. In terms of biological role, represses a number of genes involved in the response to DNA damage (SOS response), including recA and lexA. In the presence of single-stranded DNA, RecA interacts with LexA causing an autocatalytic cleavage which disrupts the DNA-binding part of LexA, leading to derepression of the SOS regulon and eventually DNA repair. The protein is LexA repressor of Roseobacter denitrificans (strain ATCC 33942 / OCh 114) (Erythrobacter sp. (strain OCh 114)).